Consider the following 185-residue polypeptide: Ribosome-recycling factor (185 aa).

Belongs to the RRF family.

Its subcellular location is the cytoplasm. Its function is as follows. Responsible for the release of ribosomes from messenger RNA at the termination of protein biosynthesis. May increase the efficiency of translation by recycling ribosomes from one round of translation to another. This chain is Ribosome-recycling factor, found in Haemophilus influenzae (strain ATCC 51907 / DSM 11121 / KW20 / Rd).